We begin with the raw amino-acid sequence, 311 residues long: Aspartate carbamoyltransferase catalytic subunit (311 aa).

Positions 55 and 56 each coordinate carbamoyl phosphate. L-aspartate is bound at residue lysine 85. Residues arginine 106, histidine 135, and glutamine 138 each contribute to the carbamoyl phosphate site. The L-aspartate site is built by arginine 168 and arginine 230. Positions 268 and 269 each coordinate carbamoyl phosphate.

Belongs to the aspartate/ornithine carbamoyltransferase superfamily. ATCase family. Heterododecamer (2C3:3R2) of six catalytic PyrB chains organized as two trimers (C3), and six regulatory PyrI chains organized as three dimers (R2).

The enzyme catalyses carbamoyl phosphate + L-aspartate = N-carbamoyl-L-aspartate + phosphate + H(+). It functions in the pathway pyrimidine metabolism; UMP biosynthesis via de novo pathway; (S)-dihydroorotate from bicarbonate: step 2/3. Catalyzes the condensation of carbamoyl phosphate and aspartate to form carbamoyl aspartate and inorganic phosphate, the committed step in the de novo pyrimidine nucleotide biosynthesis pathway. The polypeptide is Aspartate carbamoyltransferase catalytic subunit (Salmonella paratyphi A (strain AKU_12601)).